Here is a 673-residue protein sequence, read N- to C-terminus: Acetoacetyl-CoA synthetase (673 aa).

This sequence belongs to the ATP-dependent AMP-binding enzyme family.

Its subcellular location is the cytoplasm. The protein localises to the cytosol. It catalyses the reaction acetoacetate + ATP + CoA = acetoacetyl-CoA + AMP + diphosphate. In terms of biological role, converts acetoacetate to acetoacetyl-CoA in the cytosol. Ketone body-utilizing enzyme, responsible for the synthesis of cholesterol and fatty acids. The protein is Acetoacetyl-CoA synthetase (aacs) of Danio rerio (Zebrafish).